The chain runs to 313 residues: MPKAKSAASSRRRDRQEQRRELKRAGGLMFNTGIGQHILKNPLIVNSIIDKAALRPTDVVLEVGPGTGNMTVKLLEKAKKVVACELDPRLVAELHKRVQGTPLASKLQVLVGDVLKSDLPFFDACVANLPYQISSPFVFKLLLHRPFFRCAILMFQREFALRLVAKPGDKLYCRLSINTQLLARVDHLMKVGKNNFRPPPKVESSVVRIEPKNPPPPINFQEWDGLVRITFVRKNKTLSAAFKSSAVQQLLEKNYRIHCSVQNTVIPEDFSIADKIQQILTSTGFSDKRARSMDIDDFIRLLHGFNAEGIHFS.

S-adenosyl-L-methionine is bound by residues H37, L39, G64, E85, D113, and N128.

It belongs to the class I-like SAM-binding methyltransferase superfamily. rRNA adenine N(6)-methyltransferase family. As to quaternary structure, part of the small subunit (SSU) processome, composed of more than 70 proteins and the RNA chaperone small nucleolar RNA (snoRNA) U3.

It localises to the nucleus. The protein localises to the nucleoplasm. It is found in the nucleolus. It carries out the reaction adenosine(1779)/adenosine(1780) in 18S rRNA + 4 S-adenosyl-L-methionine = N(6)-dimethyladenosine(1779)/N(6)-dimethyladenosine(1780) in 18S rRNA + 4 S-adenosyl-L-homocysteine + 4 H(+). Functionally, specifically dimethylates two adjacent adenosines in the loop of a conserved hairpin near the 3'-end of 18S rRNA in the 40S particle. Involved in the pre-rRNA processing steps leading to small-subunit rRNA production independently of its RNA-modifying catalytic activity. Part of the small subunit (SSU) processome, first precursor of the small eukaryotic ribosomal subunit. During the assembly of the SSU processome in the nucleolus, many ribosome biogenesis factors, an RNA chaperone and ribosomal proteins associate with the nascent pre-rRNA and work in concert to generate RNA folding, modifications, rearrangements and cleavage as well as targeted degradation of pre-ribosomal RNA by the RNA exosome. The polypeptide is Dimethyladenosine transferase (Dimt1) (Mus musculus (Mouse)).